Reading from the N-terminus, the 624-residue chain is (-)-beta-phellandrene synthase 4, chloroplastic (624 aa).

Residues 1–48 (MAIVSSVPLASKSCLHKSLISSIHKLKPFCRTIPTLGMSRPGKSVMPS) constitute a chloroplast transit peptide. Residues 41–60 (PGKSVMPSMSMSSPVSDDGV) are disordered. Low complexity predominate over residues 44-56 (SVMPSMSMSSPVS). Mg(2+) contacts are provided by Asp375, Asp379, and Asp527. Positions 375-379 (DDMYD) match the DDXXD motif motif.

It belongs to the terpene synthase family. Tpsd subfamily. Mg(2+) is required as a cofactor. The cofactor is Mn(2+).

The protein localises to the plastid. It is found in the chloroplast. The catalysed reaction is (2E)-geranyl diphosphate = (-)-beta-phellandrene + diphosphate. It participates in terpene metabolism; oleoresin biosynthesis. Terpene synthase (TPS) involved in the biosynthesis of monoterpene natural products included in conifer oleoresin secretions and volatile emissions; these compounds contribute to biotic and abiotic stress defense against herbivores and pathogens. Catalyzes the conversion of (2E)-geranyl diphosphate (GPP) to (-)-beta-phellandrene. The chain is (-)-beta-phellandrene synthase 4, chloroplastic from Picea sitchensis (Sitka spruce).